A 405-amino-acid chain; its full sequence is Glucose-1-phosphate adenylyltransferase (405 aa).

Residues tyrosine 96, glycine 161, 176–177 (EK), and serine 194 contribute to the alpha-D-glucose 1-phosphate site.

The protein belongs to the bacterial/plant glucose-1-phosphate adenylyltransferase family. As to quaternary structure, homotetramer.

The catalysed reaction is alpha-D-glucose 1-phosphate + ATP + H(+) = ADP-alpha-D-glucose + diphosphate. It participates in glycan biosynthesis; glycogen biosynthesis. Involved in the biosynthesis of ADP-glucose, a building block required for the elongation reactions to produce glycogen. Catalyzes the reaction between ATP and alpha-D-glucose 1-phosphate (G1P) to produce pyrophosphate and ADP-Glc. This is Glucose-1-phosphate adenylyltransferase from Photobacterium profundum (strain SS9).